The primary structure comprises 612 residues: Kelch repeat and BTB domain-containing protein 3 (612 aa).

In terms of domain architecture, BTB spans 52-119; sequence YDFKIIMKDE…AYTGKTKITD (68 aa). In terms of domain architecture, BACK spans 150–250; sequence NLVNCLQLLS…VRLHQLSEET (101 aa). Kelch repeat units follow at residues 291–337, 339–390, 400–450, 452–502, and 548–595; these read STTE…GSSL, SYGE…STMK, MALD…PEAS, CQNV…ATLI, and GIED…FYCQ.

This is Kelch repeat and BTB domain-containing protein 3 from Pongo abelii (Sumatran orangutan).